Here is a 600-residue protein sequence, read N- to C-terminus: Aspartate--tRNA(Asp/Asn) ligase (600 aa).

Glutamate 174 is a binding site for L-aspartate. Residues 198 to 201 are aspartate; the sequence is QLFK. Arginine 220 contacts L-aspartate. Residues 220 to 222 and glutamine 229 contribute to the ATP site; that span reads RDE. Histidine 457 serves as a coordination point for L-aspartate. Residue glutamate 491 participates in ATP binding. Residue arginine 498 participates in L-aspartate binding. 543 to 546 is an ATP binding site; the sequence is GLDR.

The protein belongs to the class-II aminoacyl-tRNA synthetase family. Type 1 subfamily. In terms of assembly, homodimer.

The protein resides in the cytoplasm. It carries out the reaction tRNA(Asx) + L-aspartate + ATP = L-aspartyl-tRNA(Asx) + AMP + diphosphate. Aspartyl-tRNA synthetase with relaxed tRNA specificity since it is able to aspartylate not only its cognate tRNA(Asp) but also tRNA(Asn). Reaction proceeds in two steps: L-aspartate is first activated by ATP to form Asp-AMP and then transferred to the acceptor end of tRNA(Asp/Asn). This is Aspartate--tRNA(Asp/Asn) ligase from Burkholderia ambifaria (strain ATCC BAA-244 / DSM 16087 / CCUG 44356 / LMG 19182 / AMMD) (Burkholderia cepacia (strain AMMD)).